A 184-amino-acid chain; its full sequence is ATP synthase subunit b, chloroplastic (184 aa).

The helical transmembrane segment at 27–49 (LATNPINLSVVLGVLIFFGKGVL) threads the bilayer.

Belongs to the ATPase B chain family. F-type ATPases have 2 components, F(1) - the catalytic core - and F(0) - the membrane proton channel. F(1) has five subunits: alpha(3), beta(3), gamma(1), delta(1), epsilon(1). F(0) has four main subunits: a(1), b(1), b'(1) and c(10-14). The alpha and beta chains form an alternating ring which encloses part of the gamma chain. F(1) is attached to F(0) by a central stalk formed by the gamma and epsilon chains, while a peripheral stalk is formed by the delta, b and b' chains.

Its subcellular location is the plastid. It localises to the chloroplast thylakoid membrane. F(1)F(0) ATP synthase produces ATP from ADP in the presence of a proton or sodium gradient. F-type ATPases consist of two structural domains, F(1) containing the extramembraneous catalytic core and F(0) containing the membrane proton channel, linked together by a central stalk and a peripheral stalk. During catalysis, ATP synthesis in the catalytic domain of F(1) is coupled via a rotary mechanism of the central stalk subunits to proton translocation. Its function is as follows. Component of the F(0) channel, it forms part of the peripheral stalk, linking F(1) to F(0). In Oenothera elata subsp. hookeri (Hooker's evening primrose), this protein is ATP synthase subunit b, chloroplastic.